Consider the following 452-residue polypeptide: Zinc finger protein 277 (452 aa).

The C2H2-type 1 zinc finger occupies 200-224; it reads LMCLYCEKIFRDRPTLKEHMRKKGH. The interval 248–271 is disordered; it reads APTPRKQHLQKRRRETASVSTVAD. The span at 252–261 shows a compositional bias: basic residues; it reads RKQHLQKRRR. The C2H2-type 2 zinc-finger motif lies at 361 to 385; sequence LRCVTCDLQFDEEELLVEHMAQESH.

The protein belongs to the ZNF277 family. Interacts with components of the origin recognition complex (ORC) complex, Orc2 and Orc3, components of the SAGA transcription coactivator-HAT complex, Gcn5 and e(y)2, components of the mRNP biogenesis THO complex, thoc5 and e(y)2, and a component of the TFIID complex, TBP. Also interacts with polybromo, a component of the chromatin remodeling SWI/SNF complex.

It is found in the nucleus. The protein resides in the cytoplasm. In terms of biological role, DNA binding protein which is involved in the positive regulation of both basal and inducible transcription. Mainly localizes to active promoter sites and interacts with components of various transcription and replication regulatory complexes, such as the ORC, SAGA, THO, TFIID and SWI/SNF complexes. It may therefore regulate transcription by promoting the association of these complexes to their binding sites. The sequence is that of Zinc finger protein 277 from Drosophila melanogaster (Fruit fly).